A 333-amino-acid polypeptide reads, in one-letter code: Taste receptor type 2 member 38 (333 aa).

Residues 1–17 (MLTLTRIRTVSYEVRST) are Extracellular-facing. Residues 18-38 (FLFISVLEFAVGFLTNAFVFL) traverse the membrane as a helical segment. Residues 39 to 55 (VNFWDVVKRQPLSNSDC) are Cytoplasmic-facing. Residues 56 to 76 (VLLCLSISRLFLHGLLFLSAI) traverse the membrane as a helical segment. Residues 77–94 (QLTHFQKLSEPLNHSYQA) lie on the Extracellular side of the membrane. Residues 95-115 (IIMLWMIANQANLWLAACLSL) traverse the membrane as a helical segment. Residues 116-142 (LYCSKLIRFSHTFLICLASWVSRKISQ) are Cytoplasmic-facing. A helical membrane pass occupies residues 143–163 (MLLGIILCSCICTVLCVWCFF). The Extracellular segment spans residues 164–190 (SRPHFTVTTVLFMNNNTRLNWQIKDLN). An N-linked (GlcNAc...) asparagine glycan is attached at asparagine 178. A helical transmembrane segment spans residues 191 to 211 (LFYSFLFCYLWSVPPFLLFLV). The Cytoplasmic portion of the chain corresponds to 212 to 251 (SSGMLTVSLGRHMRTMKVYIRDSRDPSLEAHIKALKSLVS). The chain crosses the membrane as a helical span at residues 252–272 (FFCFFVISSCAAFISVPLLIL). Residues 273–276 (WRDK) are Extracellular-facing. The chain crosses the membrane as a helical span at residues 277–297 (IGVMVCVGIMAACPSGHAAVL). Residues 298–333 (ISGNAKLRRAVTTILLWAQSSLKVRADHKADSRTPC) lie on the Cytoplasmic side of the membrane.

Belongs to the G-protein coupled receptor T2R family.

The protein localises to the membrane. Its function is as follows. Receptor that may play a role in the perception of bitterness and is gustducin-linked. May play a role in sensing the chemical composition of the gastrointestinal content. The activity of this receptor may stimulate alpha gustducin, mediate PLC-beta-2 activation and lead to the gating of TRPM5. This chain is Taste receptor type 2 member 38 (TAS2R38), found in Gorilla gorilla gorilla (Western lowland gorilla).